Here is a 163-residue protein sequence, read N- to C-terminus: MAKSNKIFTNTLRLLALAATVVAIVFMVTSHDSAQVLNLTFTAKYSNTPAFKFLVIGEAIAGGYTVISILLSFKGLFWRLIVILDMVTTVLLTSSISAALAIAQVGKKGNTHAGWLPICGQVPDFCDYVTIALIAGFAAAIIYFVLLLCSLYVVLSPIFVATP.

Over 1-6 (MAKSNK) the chain is Cytoplasmic. A helical membrane pass occupies residues 7-27 (IFTNTLRLLALAATVVAIVFM). The Extracellular portion of the chain corresponds to 28-52 (VTSHDSAQVLNLTFTAKYSNTPAFK). N38 is a glycosylation site (N-linked (GlcNAc...) asparagine). Residues 53 to 73 (FLVIGEAIAGGYTVISILLSF) traverse the membrane as a helical segment. Topologically, residues 74 to 79 (KGLFWR) are cytoplasmic. A helical membrane pass occupies residues 80–100 (LIVILDMVTTVLLTSSISAAL). Over 101–128 (AIAQVGKKGNTHAGWLPICGQVPDFCDY) the chain is Extracellular. Residues 129 to 149 (VTIALIAGFAAAIIYFVLLLC) form a helical membrane-spanning segment. The Cytoplasmic portion of the chain corresponds to 150-163 (SLYVVLSPIFVATP).

It belongs to the Casparian strip membrane proteins (CASP) family. Homodimer and heterodimers.

The protein localises to the cell membrane. This Populus trichocarpa (Western balsam poplar) protein is CASP-like protein 1C2.